The chain runs to 480 residues: Glycogen synthase (480 aa).

K15 is a binding site for ADP-alpha-D-glucose.

This sequence belongs to the glycosyltransferase 1 family. Bacterial/plant glycogen synthase subfamily.

The catalysed reaction is [(1-&gt;4)-alpha-D-glucosyl](n) + ADP-alpha-D-glucose = [(1-&gt;4)-alpha-D-glucosyl](n+1) + ADP + H(+). It participates in glycan biosynthesis; glycogen biosynthesis. Synthesizes alpha-1,4-glucan chains using ADP-glucose. The protein is Glycogen synthase of Opitutus terrae (strain DSM 11246 / JCM 15787 / PB90-1).